Here is a 684-residue protein sequence, read N- to C-terminus: Methionine--tRNA ligase (684 aa).

Residues 17 to 27 (PYANGKAHVGH) carry the 'HIGH' region motif. Residues cysteine 148, cysteine 151, cysteine 160, and cysteine 164 each coordinate Zn(2+). Positions 330–334 (TFSKS) match the 'KMSKS' region motif. An ATP-binding site is contributed by lysine 333. In terms of domain architecture, tRNA-binding spans 582–684 (DFSKLDIRIG…KETNPGTCIH (103 aa)).

It belongs to the class-I aminoacyl-tRNA synthetase family. MetG type 1 subfamily. Homodimer. Zn(2+) is required as a cofactor.

Its subcellular location is the cytoplasm. It carries out the reaction tRNA(Met) + L-methionine + ATP = L-methionyl-tRNA(Met) + AMP + diphosphate. Its function is as follows. Is required not only for elongation of protein synthesis but also for the initiation of all mRNA translation through initiator tRNA(fMet) aminoacylation. This Methanococcoides burtonii (strain DSM 6242 / NBRC 107633 / OCM 468 / ACE-M) protein is Methionine--tRNA ligase.